The chain runs to 65 residues: Prokaryotic ubiquitin-like protein Pup (65 aa).

Positions 1 to 14 are enriched in basic and acidic residues; the sequence is MSGHEQQRPSRREE. Residues 1–35 form a disordered region; it reads MSGHEQQRPSRREEDVEETPVVPAQAGAQAKESDA. The tract at residues 21–59 is ARC ATPase binding; that stretch reads VVPAQAGAQAKESDADVDALLDEIDEVLESNSEEFVRGF. Residues 26-49 adopt a coiled-coil conformation; it reads AGAQAKESDADVDALLDEIDEVLE. Deamidated glutamine is present on glutamine 65. An Isoglutamyl lysine isopeptide (Gln-Lys) (interchain with K-? in acceptor proteins) cross-link involves residue glutamine 65.

The protein belongs to the prokaryotic ubiquitin-like protein family. Strongly interacts with the proteasome-associated ATPase ARC through a hydrophobic interface; the interacting region of Pup lies in its C-terminal half. There is one Pup binding site per ARC hexamer ring. In terms of processing, is modified by deamidation of its C-terminal glutamine to glutamate by the deamidase Dop, a prerequisite to the subsequent pupylation process.

The protein operates within protein degradation; proteasomal Pup-dependent pathway. Functionally, protein modifier that is covalently attached to lysine residues of substrate proteins, thereby targeting them for proteasomal degradation. The tagging system is termed pupylation. The chain is Prokaryotic ubiquitin-like protein Pup from Kineococcus radiotolerans (strain ATCC BAA-149 / DSM 14245 / SRS30216).